We begin with the raw amino-acid sequence, 614 residues long: MSSTKKHSRSEGEEKDARLAKKVKTDETPVDGEVKKERKKDKKEKKDKKEKKDKKSKKEKKDQDESPATESTEDVSMPDAAAEPVADKKEKKEKKDKKEKKDKKEKKAKKSDESTTEESTSASKATTNGTTTPAASTNGAYTYKQADALSALPESEIETFLKEKEIVIKDPSSSNLRPIMNFSQLPQSNLISKNPFAAYTNPTPIQSASWPFSLSGRDVIGIAETGSGKTMAFSLPCVESLASRPKPKFNSRDRTAHPRAVIVSPTRELAMQTHAALSGLASLVGLSAVCIFGGSDKNEQRNLLYKNNGVDIITATPGRLKDFLSEGSISLANVSFAVLDEADRMLDRGFSEDIKLILSGCPPKEQRQTLMFTATWPLDIQKLAESYMINPAQVTIGHRTRAGGDGEGNGNIELQANSRIEQKVEVVDPRGKEFRLYELLKEAQKGSQKDDRILVFCLYKKEAVRVEQFLSRKGIKVASIHGDLRQDQRTRSLEAFKSGTTTVLVATDVAARGLDIPEVKLVINVTFPLTIEDYVHRIGRTGRAGKLGKAITLFTEHDKAHSGSLVNILRAAKQPVPEELLKFGTTVKKKAHDAYGSFYKDIDPNKKATKITFD.

The segment at 1 to 138 is disordered; that stretch reads MSSTKKHSRS…GTTTPAASTN (138 aa). Positions 9-36 are enriched in basic and acidic residues; it reads RSEGEEKDARLAKKVKTDETPVDGEVKK. Composition is skewed to basic residues over residues 37 to 58 and 91 to 109; these read ERKK…KSKK and KKEK…KKAK. Low complexity predominate over residues 117–138; sequence EESTSASKATTNGTTTPAASTN. Positions 180 to 207 match the Q motif motif; that stretch reads MNFSQLPQSNLISKNPFAAYTNPTPIQS. The Helicase ATP-binding domain occupies 210-394; that stretch reads WPFSLSGRDV…ESYMINPAQV (185 aa). Residue 223-230 coordinates ATP; sequence AETGSGKT. Positions 340–343 match the DEAD box motif; it reads DEAD. The region spanning 435–584 is the Helicase C-terminal domain; that stretch reads RLYELLKEAQ…PVPEELLKFG (150 aa).

This sequence belongs to the DEAD box helicase family. DDX5/DBP2 subfamily.

It is found in the nucleus. It localises to the nucleolus. The catalysed reaction is ATP + H2O = ADP + phosphate + H(+). ATP-dependent RNA helicase required for 60S ribosomal subunit synthesis. Involved in efficient pre-rRNA processing, predominantly at site A3, which is necessary for the normal formation of 25S and 5.8S rRNAs. This Neurospora crassa (strain ATCC 24698 / 74-OR23-1A / CBS 708.71 / DSM 1257 / FGSC 987) protein is ATP-dependent RNA helicase dbp-3 (dbp-3).